The chain runs to 332 residues: Transaldolase (332 aa).

The active-site Schiff-base intermediate with substrate is Lys135.

The protein belongs to the transaldolase family. Type 1 subfamily. As to quaternary structure, homodimer.

It localises to the cytoplasm. The catalysed reaction is D-sedoheptulose 7-phosphate + D-glyceraldehyde 3-phosphate = D-erythrose 4-phosphate + beta-D-fructose 6-phosphate. The protein operates within carbohydrate degradation; pentose phosphate pathway; D-glyceraldehyde 3-phosphate and beta-D-fructose 6-phosphate from D-ribose 5-phosphate and D-xylulose 5-phosphate (non-oxidative stage): step 2/3. Transaldolase is important for the balance of metabolites in the pentose-phosphate pathway. This Prochlorococcus marinus (strain NATL2A) protein is Transaldolase.